Reading from the N-terminus, the 447-residue chain is UDP-glycosyltransferase 76E3 (447 aa).

UDP-alpha-D-glucose contacts are provided by residues S269, 328–330 (APQ), 345–353 (HCGWNSTLE), and 367–370 (QGEQ).

Belongs to the UDP-glycosyltransferase family.

This chain is UDP-glycosyltransferase 76E3 (UGT76E3), found in Arabidopsis thaliana (Mouse-ear cress).